Reading from the N-terminus, the 410-residue chain is uncharacterized protein (410 aa).

Residues Met1 to Ala41 form the signal peptide.

As to quaternary structure, interacts with PcrA, Pdp, YclM, YkvL, YhcQ and YomL. The interaction with PcrA is not essential for cell viability or repair of UV-induced lesions.

The protein resides in the secreted. Increases the processivity of the PcrA helicase, but does not bind to DNA. This is an uncharacterized protein from Bacillus subtilis (strain 168).